A 346-amino-acid chain; its full sequence is Histone H1.8 (346 aa).

Low complexity-rich tracts occupy residues Met1 to Ser23 and Pro38 to Val48. 2 disordered regions span residues Met1–Arg50 and Ala121–Ala346. An H15 domain is found at Arg51–Pro129. A compositionally biased stretch (basic residues) spans Val128–Pro137. Over residues Arg148–Pro167 the composition is skewed to basic and acidic residues. The short motif at Lys164–Arg179 is the Nuclear localization signal element. Basic residues predominate over residues Lys172–Lys182. 2 stretches are compositionally biased toward basic and acidic residues: residues Lys205 to Met225 and Glu251 to Ser262. Basic residues predominate over residues Thr278–Ala288. Over residues Lys298–Lys309 the composition is skewed to low complexity. The segment covering Ala334–Ala346 has biased composition (polar residues).

Belongs to the histone H1/H5 family. As to expression, oocyte-specific.

It is found in the cytoplasm. The protein localises to the nucleus. The protein resides in the chromosome. May play a key role in the control of gene expression during oogenesis and early embryogenesis, presumably through the perturbation of chromatin structure. Essential for meiotic maturation of germinal vesicle-stage oocytes. The somatic type linker histone H1c is rapidly replaced by H1oo in a donor nucleus transplanted into an oocyte. The greater mobility of H1oo as compared to H1c may contribute to this rapid replacement and increased instability of the embryonic chromatin structure. The rapid replacement of H1c with H1oo may play an important role in nuclear remodeling. The sequence is that of Histone H1.8 from Homo sapiens (Human).